A 248-amino-acid polypeptide reads, in one-letter code: Floral homeotic protein AGAMOUS (248 aa).

The MADS-box domain maps to 19–73 (RGKIEIKRIENTTNRQVTFCKRRNGLLKKAYELSVLCDAEVALIVFSSRGRLYEY). In terms of domain architecture, K-box spans 103-193 (AQYYQQEASK…RAKIAETERA (91 aa)). Positions 196 to 219 (QQQQQQMNLMPGSSSYELVPPPHQ) are disordered. Residues 202–211 (MNLMPGSSSY) are compositionally biased toward polar residues.

It localises to the nucleus. Functionally, probable transcription factor involved in regulating genes that determines stamen and carpel development in wild-type flowers. This chain is Floral homeotic protein AGAMOUS (AG1), found in Nicotiana tabacum (Common tobacco).